Here is a 397-residue protein sequence, read N- to C-terminus: Phosphoglycerate kinase (397 aa).

Substrate contacts are provided by residues 22 to 24 (DLN), Arg37, 60 to 63 (HFGR), Arg119, and Arg152. ATP is bound by residues Lys202, Glu324, and 354 to 357 (GGDT).

Belongs to the phosphoglycerate kinase family. As to quaternary structure, monomer.

It localises to the cytoplasm. It carries out the reaction (2R)-3-phosphoglycerate + ATP = (2R)-3-phospho-glyceroyl phosphate + ADP. The protein operates within carbohydrate degradation; glycolysis; pyruvate from D-glyceraldehyde 3-phosphate: step 2/5. The chain is Phosphoglycerate kinase from Rhizorhabdus wittichii (strain DSM 6014 / CCUG 31198 / JCM 15750 / NBRC 105917 / EY 4224 / RW1) (Sphingomonas wittichii).